We begin with the raw amino-acid sequence, 251 residues long: Pyrroloquinoline-quinone synthase (251 aa).

The protein belongs to the PqqC family.

It carries out the reaction 6-(2-amino-2-carboxyethyl)-7,8-dioxo-1,2,3,4,7,8-hexahydroquinoline-2,4-dicarboxylate + 3 O2 = pyrroloquinoline quinone + 2 H2O2 + 2 H2O + H(+). The protein operates within cofactor biosynthesis; pyrroloquinoline quinone biosynthesis. Ring cyclization and eight-electron oxidation of 3a-(2-amino-2-carboxyethyl)-4,5-dioxo-4,5,6,7,8,9-hexahydroquinoline-7,9-dicarboxylic-acid to PQQ. The chain is Pyrroloquinoline-quinone synthase from Cronobacter sakazakii (strain ATCC BAA-894) (Enterobacter sakazakii).